A 292-amino-acid chain; its full sequence is tRNA pseudouridine synthase B (292 aa).

The Nucleophile role is filled by Asp38.

The protein belongs to the pseudouridine synthase TruB family. Type 1 subfamily.

The enzyme catalyses uridine(55) in tRNA = pseudouridine(55) in tRNA. Functionally, responsible for synthesis of pseudouridine from uracil-55 in the psi GC loop of transfer RNAs. In Streptococcus gordonii (strain Challis / ATCC 35105 / BCRC 15272 / CH1 / DL1 / V288), this protein is tRNA pseudouridine synthase B.